The following is a 232-amino-acid chain: Large ribosomal subunit protein uL1 (232 aa).

Belongs to the universal ribosomal protein uL1 family. As to quaternary structure, part of the 50S ribosomal subunit.

In terms of biological role, binds directly to 23S rRNA. The L1 stalk is quite mobile in the ribosome, and is involved in E site tRNA release. Protein L1 is also a translational repressor protein, it controls the translation of the L11 operon by binding to its mRNA. In Amoebophilus asiaticus (strain 5a2), this protein is Large ribosomal subunit protein uL1.